We begin with the raw amino-acid sequence, 252 residues long: 3-dehydroquinate dehydratase (252 aa).

3-dehydroquinate-binding positions include Ser-21, 46-48, and Arg-82; that span reads EWR. His-143 (proton donor/acceptor) is an active-site residue. The active-site Schiff-base intermediate with substrate is the Lys-170. 3-dehydroquinate contacts are provided by Arg-213, Ser-232, and Gln-236.

This sequence belongs to the type-I 3-dehydroquinase family. In terms of assembly, homodimer.

It carries out the reaction 3-dehydroquinate = 3-dehydroshikimate + H2O. Its pathway is metabolic intermediate biosynthesis; chorismate biosynthesis; chorismate from D-erythrose 4-phosphate and phosphoenolpyruvate: step 3/7. Its function is as follows. Involved in the third step of the chorismate pathway, which leads to the biosynthesis of aromatic amino acids. Catalyzes the cis-dehydration of 3-dehydroquinate (DHQ) and introduces the first double bond of the aromatic ring to yield 3-dehydroshikimate. The chain is 3-dehydroquinate dehydratase from Escherichia coli (strain SE11).